We begin with the raw amino-acid sequence, 513 residues long: Maturase K (513 aa).

Belongs to the intron maturase 2 family. MatK subfamily.

The protein resides in the plastid. Its subcellular location is the chloroplast. Usually encoded in the trnK tRNA gene intron. Probably assists in splicing its own and other chloroplast group II introns. The chain is Maturase K from Cyrilla racemiflora (Swamp titi).